The primary structure comprises 1452 residues: ABC multidrug transporter A (1452 aa).

Residues methionine 1–glutamate 20 form a disordered region. 5 N-linked (GlcNAc...) asparagine glycosylation sites follow: asparagine 2, asparagine 10, asparagine 228, asparagine 287, and asparagine 311. One can recognise an ABC transporter 1 domain in the interval leucine 110–aspartate 363. The next 6 membrane-spanning stretches (helical) occupy residues valine 474–tyrosine 494, alanine 508–leucine 528, methionine 554–phenylalanine 574, glycine 583–phenylalanine 603, valine 616–proline 636, and isoleucine 725–phenylalanine 745. The 243-residue stretch at phenylalanine 802 to glycine 1044 folds into the ABC transporter 2 domain. Residue glycine 838 to threonine 845 participates in ATP binding. 5 helical membrane passes run alanine 1153–isoleucine 1173, isoleucine 1183–alanine 1203, phenylalanine 1223–phenylalanine 1243, leucine 1271–phenylalanine 1291, and alanine 1297–threonine 1317. Asparagine 1350, asparagine 1365, and asparagine 1391 each carry an N-linked (GlcNAc...) asparagine glycan. The chain crosses the membrane as a helical span at residues phenylalanine 1418 to tryptophan 1438.

Belongs to the ABC transporter superfamily. ABCG family. PDR (TC 3.A.1.205) subfamily.

It localises to the membrane. In terms of biological role, ABC transporter that seems not to be involved in the efflux of toxic substances, at least not the classical compounds such as itraconazole, amphotericin B, voriconazole, posaconazole, ravuconazole, or echinocandins. The chain is ABC multidrug transporter A from Aspergillus fumigatus (Neosartorya fumigata).